Consider the following 274-residue polypeptide: Large ribosomal subunit protein uL2 (274 aa).

Positions 224 to 259 (AMNPVDHPHGGGEGRTSGGRHPVTPWGIPTKGYKTR) are disordered.

This sequence belongs to the universal ribosomal protein uL2 family. As to quaternary structure, part of the 50S ribosomal subunit. Forms a bridge to the 30S subunit in the 70S ribosome.

Functionally, one of the primary rRNA binding proteins. Required for association of the 30S and 50S subunits to form the 70S ribosome, for tRNA binding and peptide bond formation. It has been suggested to have peptidyltransferase activity; this is somewhat controversial. Makes several contacts with the 16S rRNA in the 70S ribosome. This chain is Large ribosomal subunit protein uL2, found in Citrifermentans bemidjiense (strain ATCC BAA-1014 / DSM 16622 / JCM 12645 / Bem) (Geobacter bemidjiensis).